The chain runs to 654 residues: MAVIQQLDDALSNKIAAGEVVERPASIVKELVENAIDANSSQILVEIEEGGLSSIRIVDNGTGIEPNELELAFSRHATSKIKTDRDLFTICTLGFRGEALPSIASVSRVNMQTSTGSAGMQVELEGGKIVHKQPSEARKGTTIVVTDLFYNTPARLKYLKTVLTEAGHVSEVMNRMALAYPHIRFHYVSDGKTVLKTAGNGDLRQVIAQVYGRKTAEKMVPITGSSLDYELRGYIAKPELTRANRQYMSIFINGRYIRNFKLAKAIQQGFHTKLPIGRFPIAVLKLEMDPTLIDVNVHPAKLEVRLSKEEALSEMIAESIKKALSEETLIPEPKKENTAKTKSEQLSFSLAYELQPEKEHVRETMQQPRQLAADDQVDRKKESTSIGNSWSPSHQQEEEVEQGRGSNASIPPRNERVETNTEEKYEQADRRTDESLPMEMEEEAAVVEPQLPLGNDAEAKGAMPPLYPVGQMHGTYIVAQNEQGMYLIDQHAAQERIKYEHFHQKLAEPLGQTQELLVPITLELTTRETLVVTESKEKLEAVGVFLEEFGKNTFVVRSHPTWFPQGDEESTIREMVEQLLDNKRISIGELREEAAIMMSCKAAIKANRHLRTDEMFQLLETLRRCQEPYTCPHGRPVVIHFSTYELEKMFKRVM.

The segment at 358–437 (KEHVRETMQQ…ADRRTDESLP (80 aa)) is disordered. A compositionally biased stretch (polar residues) spans 384-394 (TSIGNSWSPSH). Positions 413–434 (RNERVETNTEEKYEQADRRTDE) are enriched in basic and acidic residues.

This sequence belongs to the DNA mismatch repair MutL/HexB family.

Functionally, this protein is involved in the repair of mismatches in DNA. It is required for dam-dependent methyl-directed DNA mismatch repair. May act as a 'molecular matchmaker', a protein that promotes the formation of a stable complex between two or more DNA-binding proteins in an ATP-dependent manner without itself being part of a final effector complex. In Shouchella clausii (strain KSM-K16) (Alkalihalobacillus clausii), this protein is DNA mismatch repair protein MutL.